We begin with the raw amino-acid sequence, 380 residues long: Cytochrome b (380 aa).

4 helical membrane-spanning segments follow: residues 33–53, 77–98, 113–133, and 178–198; these read FGSL…FLAM, WLIR…YLHI, WNIG…GYVL, and FFAF…LHLL. Heme b contacts are provided by His83 and His97. Residues His182 and His196 each contribute to the heme b site. His201 contacts a ubiquinone. 4 consecutive transmembrane segments (helical) span residues 226–246, 288–308, 320–340, and 347–367; these read YKDL…ALFT, LGGV…PILH, VTQF…WIGG, and YIII…LIMP.

This sequence belongs to the cytochrome b family. As to quaternary structure, the cytochrome bc1 complex contains 3 respiratory subunits (MT-CYB, CYC1 and UQCRFS1), 2 core proteins (UQCRC1 and UQCRC2) and probably 6 low-molecular weight proteins. Heme b is required as a cofactor.

Its subcellular location is the mitochondrion inner membrane. Component of the ubiquinol-cytochrome c reductase complex (complex III or cytochrome b-c1 complex) that is part of the mitochondrial respiratory chain. The b-c1 complex mediates electron transfer from ubiquinol to cytochrome c. Contributes to the generation of a proton gradient across the mitochondrial membrane that is then used for ATP synthesis. This is Cytochrome b (mt-cyb) from Pagrus major (Red sea bream).